The sequence spans 109 residues: Transcription initiation factor IIA subunit 2 (109 aa).

This sequence belongs to the TFIIA subunit 2 family. TFIIA is a heterodimer composed of the large toa1 and the small toa2 subunits.

The protein resides in the nucleus. It localises to the cytoplasm. TFIIA is a component of the transcription machinery of RNA polymerase II and plays an important role in transcriptional activation. TFIIA in a complex with tbp mediates transcriptional activity. This Schizosaccharomyces pombe (strain 972 / ATCC 24843) (Fission yeast) protein is Transcription initiation factor IIA subunit 2 (toa2).